The primary structure comprises 468 residues: Acid phosphatase PHO1 (468 aa).

An N-terminal signal peptide occupies residues 1-22 (MFSPILSLEIILALATLQSVFA). Residue histidine 84 is the Nucleophile of the active site. N-linked (GlcNAc...) asparagine glycosylation is found at asparagine 163, asparagine 196, asparagine 256, and asparagine 321. Residue aspartate 346 is the Proton donor of the active site. Asparagine 360 and asparagine 453 each carry an N-linked (GlcNAc...) asparagine glycan.

This sequence belongs to the histidine acid phosphatase family.

The catalysed reaction is a phosphate monoester + H2O = an alcohol + phosphate. The protein is Acid phosphatase PHO1 (PHO1) of Komagataella pastoris (Yeast).